The primary structure comprises 208 residues: GTP cyclohydrolase 1 (208 aa).

C89, H92, and C163 together coordinate Zn(2+).

It belongs to the GTP cyclohydrolase I family. Homomer.

The enzyme catalyses GTP + H2O = 7,8-dihydroneopterin 3'-triphosphate + formate + H(+). The protein operates within cofactor biosynthesis; 7,8-dihydroneopterin triphosphate biosynthesis; 7,8-dihydroneopterin triphosphate from GTP: step 1/1. The protein is GTP cyclohydrolase 1 of Saccharolobus islandicus (strain Y.N.15.51 / Yellowstone #2) (Sulfolobus islandicus).